The chain runs to 162 residues: MARVEL domain-containing protein 1 (162 aa).

The Cytoplasmic portion of the chain corresponds to 1–17 (MPTQPQEKRSFLQFLKS). Positions 14-155 (FLKSFVGIVR…SGIYCSCRKC (142 aa)) constitute an MARVEL domain. A helical membrane pass occupies residues 18-38 (FVGIVRVLQILLGAGLWVTIA). Residues 39–47 (ANKYEGSIH) lie on the Extracellular side of the membrane. The chain crosses the membrane as a helical span at residues 48-68 (FVLFVAVLFWLLTLAIFILTL). Residues 69–86 (LDKQDLVPIVGGERWLLS) are Cytoplasmic-facing. The helical transmembrane segment at 87–107 (NLIHDVVATLLYLSTIGIMIY) threads the bilayer. Residues 108–127 (KTQKNSYCNLDVYKHHCLYK) lie on the Extracellular side of the membrane. The chain crosses the membrane as a helical span at residues 128–148 (VYLTASVFACLTAAVYLLSGI). The Cytoplasmic portion of the chain corresponds to 149–162 (YCSCRKCRGERTVV).

It is found in the membrane. Its subcellular location is the nucleus. The polypeptide is MARVEL domain-containing protein 1 (marveld1) (Danio rerio (Zebrafish)).